Reading from the N-terminus, the 509-residue chain is Steroid 17-alpha-hydroxylase/17,20 lyase (509 aa).

Asparagine 202 is a binding site for substrate. A heme-binding site is contributed by cysteine 442.

This sequence belongs to the cytochrome P450 family. Heme is required as a cofactor.

It localises to the endoplasmic reticulum membrane. It is found in the microsome membrane. The catalysed reaction is a C21-steroid + reduced [NADPH--hemoprotein reductase] + O2 = a 17alpha-hydroxy-C21-steroid + oxidized [NADPH--hemoprotein reductase] + H2O + H(+). It catalyses the reaction progesterone + reduced [NADPH--hemoprotein reductase] + O2 = 17alpha-hydroxyprogesterone + oxidized [NADPH--hemoprotein reductase] + H2O + H(+). The enzyme catalyses pregnenolone + reduced [NADPH--hemoprotein reductase] + O2 = 17alpha-hydroxypregnenolone + oxidized [NADPH--hemoprotein reductase] + H2O + H(+). It carries out the reaction 17alpha-hydroxyprogesterone + reduced [NADPH--hemoprotein reductase] + O2 = androst-4-ene-3,17-dione + acetate + oxidized [NADPH--hemoprotein reductase] + H2O + 2 H(+). The catalysed reaction is 17alpha-hydroxyprogesterone + reduced [NADPH--hemoprotein reductase] + O2 = 16alpha,17alpha-dihydroxyprogesterone + oxidized [NADPH--hemoprotein reductase] + H2O + H(+). It catalyses the reaction 16alpha,17alpha-dihydroxyprogesterone + reduced [NADPH--hemoprotein reductase] + O2 = 6beta,16alpha,17alpha-trihydroxyprogesterone + oxidized [NADPH--hemoprotein reductase] + H2O + H(+). The enzyme catalyses 17alpha-hydroxypregnenolone + reduced [NADPH--hemoprotein reductase] + O2 = 3beta-hydroxyandrost-5-en-17-one + acetate + oxidized [NADPH--hemoprotein reductase] + H2O + 2 H(+). It carries out the reaction 16alpha,17alpha-dihydroxypregnenolone + reduced [NADPH--hemoprotein reductase] + O2 = 3beta,16alpha-dihydroxy-androst-5-en-17-one + acetate + oxidized [NADPH--hemoprotein reductase] + H2O + 2 H(+). The catalysed reaction is 3beta-hydroxyandrost-5-en-17-one + reduced [NADPH--hemoprotein reductase] + O2 = 3beta,16alpha-dihydroxy-androst-5-en-17-one + oxidized [NADPH--hemoprotein reductase] + H2O + H(+). It catalyses the reaction androst-4-ene-3,17-dione + reduced [NADPH--hemoprotein reductase] + O2 = 16alpha-hydroxyandrost-4-ene-3,17-dione + oxidized [NADPH--hemoprotein reductase] + H2O + H(+). Its pathway is steroid hormone biosynthesis. It participates in steroid biosynthesis; glucocorticoid biosynthesis. With respect to regulation, regulated predominantly by intracellular cAMP levels. The 17,20-lyase activity is stimulated by cytochrome b5, which acts as an allosteric effector increasing the Vmax of the lyase activity. In terms of biological role, a cytochrome P450 monooxygenase involved in corticoid and androgen biosynthesis. Catalyzes 17-alpha hydroxylation of C21 steroids, which is common for both pathways. A second oxidative step, required only for androgen synthesis, involves an acyl-carbon cleavage. The 17-alpha hydroxy intermediates, as part of adrenal glucocorticoids biosynthesis pathway, are precursors of cortisol. Hydroxylates steroid hormones, pregnenolone and progesterone to form 17-alpha hydroxy metabolites, followed by the cleavage of the C17-C20 bond to form C19 steroids, dehydroepiandrosterone (DHEA) and androstenedione. Has 16-alpha hydroxylase activity. Catalyzes 16-alpha hydroxylation of 17-alpha hydroxy pregnenolone, followed by the cleavage of the C17-C20 bond to form 16-alpha-hydroxy DHEA. Also 16-alpha hydroxylates androgens, relevant for estriol synthesis. Mechanistically, uses molecular oxygen inserting one oxygen atom into a substrate, and reducing the second into a water molecule, with two electrons provided by NADPH via cytochrome P450 reductase (CPR; NADPH-ferrihemoprotein reductase). The protein is Steroid 17-alpha-hydroxylase/17,20 lyase (CYP17A1) of Capra hircus (Goat).